We begin with the raw amino-acid sequence, 544 residues long: Chaperonin GroEL 3 (544 aa).

ATP contacts are provided by residues 30-33 (TLGP), Lys-51, 87-91 (DGTTT), Gly-415, and Asp-496.

This sequence belongs to the chaperonin (HSP60) family. Forms a cylinder of 14 subunits composed of two heptameric rings stacked back-to-back. Interacts with the co-chaperonin GroES.

It is found in the cytoplasm. The catalysed reaction is ATP + H2O + a folded polypeptide = ADP + phosphate + an unfolded polypeptide.. In terms of biological role, together with its co-chaperonin GroES, plays an essential role in assisting protein folding. The GroEL-GroES system forms a nano-cage that allows encapsulation of the non-native substrate proteins and provides a physical environment optimized to promote and accelerate protein folding. This chain is Chaperonin GroEL 3, found in Rhizobium etli (strain ATCC 51251 / DSM 11541 / JCM 21823 / NBRC 15573 / CFN 42).